The sequence spans 379 residues: Tubby-like F-box protein 7 (379 aa).

Over residues 18–28 (FHQGETTTAPE) the composition is skewed to polar residues. Positions 18-41 (FHQGETTTAPESESIPPPSNMAGS) are disordered. The F-box domain occupies 42-97 (SSWSAMLPELLGEIIRRVEETEDRWPQRRDVVTCACVSKKWREITHDFARSSLNSG). Disordered regions lie at residues 193 to 212 (SQPP…RRFA) and 248 to 278 (TLRC…IMKK).

The protein belongs to the TUB family. In terms of tissue distribution, ubiquitous.

This is Tubby-like F-box protein 7 from Arabidopsis thaliana (Mouse-ear cress).